Reading from the N-terminus, the 177-residue chain is Thymidine kinase (177 aa).

11 to 18 contacts ATP; sequence GPMFSGKS. Glu-83 serves as the catalytic Proton acceptor. Phe-113 lines the substrate pocket. Zn(2+)-binding residues include Cys-138 and Cys-141. 157-161 is a binding site for substrate; it reads IEIIG. The Zn(2+) site is built by Cys-170 and Cys-173.

This sequence belongs to the thymidine kinase family. Homotetramer. Two molecules of substrate bind to each enzyme tetramer.

The catalysed reaction is thymidine + ATP = dTMP + ADP + H(+). Phosphorylates thymidine and thymidine analogs, such as azidothymidine (AZT). Part of the salvage pathway for pyrimidine deoxyribonucleotide synthesis. The protein is Thymidine kinase (OPG101) of Cynomys gunnisoni (Gunnison's prairie dog).